A 291-amino-acid polypeptide reads, in one-letter code: Gamma-soluble NSF attachment protein (291 aa).

The protein belongs to the SNAP family.

The protein resides in the membrane. Its function is as follows. Required for vesicular transport between the endoplasmic reticulum and the Golgi apparatus. Binds to SNARE complex and then recruits NSF to disassemble it. The sequence is that of Gamma-soluble NSF attachment protein (GSNAP) from Arabidopsis thaliana (Mouse-ear cress).